The sequence spans 306 residues: Probable pinoresinol-lariciresinol reductase 3 (306 aa).

NADP(+) is bound by residues 14 to 20, arginine 39, and lysine 46; that span reads GATGRLG. Catalysis depends on lysine 131, which acts as the Proton acceptor. Arginine 135 provides a ligand contact to NADP(+).

Belongs to the NmrA-type oxidoreductase family. Isoflavone reductase subfamily. In terms of assembly, dimer.

Functionally, probable reductase that might be involved in the reduction of lariciresinol into secoisolariciresinol. In most plant species, a single enzyme is able to reduce both pinoresinol and lariciresinol efficiently while in Arabidopsis, PRR1 and PRR2 show a strict substrate selectivity for pinoresinol. The polypeptide is Probable pinoresinol-lariciresinol reductase 3 (PLR3) (Arabidopsis thaliana (Mouse-ear cress)).